Here is a 146-residue protein sequence, read N- to C-terminus: Globin (146 aa).

N-acetylserine is present on S1. The 146-residue stretch at 1–146 folds into the Globin domain; that stretch reads SLSGAEADLL…IIDALKKAGK (146 aa). H95 is a binding site for heme b.

It belongs to the globin family. As to quaternary structure, monomer.

In Bursatella leachii (Ragged sea hare), this protein is Globin.